Reading from the N-terminus, the 84-residue chain is Small ribosomal subunit protein uS17 (84 aa).

This sequence belongs to the universal ribosomal protein uS17 family. As to quaternary structure, part of the 30S ribosomal subunit.

In terms of biological role, one of the primary rRNA binding proteins, it binds specifically to the 5'-end of 16S ribosomal RNA. The chain is Small ribosomal subunit protein uS17 from Clostridioides difficile (strain 630) (Peptoclostridium difficile).